The chain runs to 225 residues: Sugar fermentation stimulation protein homolog (225 aa).

This sequence belongs to the SfsA family.

This Sulfolobus acidocaldarius (strain ATCC 33909 / DSM 639 / JCM 8929 / NBRC 15157 / NCIMB 11770) protein is Sugar fermentation stimulation protein homolog.